A 1024-amino-acid chain; its full sequence is SWI/SNF-related matrix-associated actin-dependent regulator of chromatin subfamily A containing DEAD/H box 1 (1024 aa).

Residue methionine 1 is modified to N-acetylmethionine. The tract at residues 1 to 83 is disordered; the sequence is MNLFNLDRFR…NESKASLSCF (83 aa). The segment covering 7 to 19 has biased composition (basic and acidic residues); that stretch reads DRFRFEKRSKIEE. Residue threonine 54 is modified to Phosphothreonine. Serine 57 carries the post-translational modification Phosphoserine. Lysine 77 is covalently cross-linked (Glycyl lysine isopeptide (Lys-Gly) (interchain with G-Cter in SUMO2)). 6 positions are modified to phosphoserine: serine 79, serine 124, serine 127, serine 132, serine 145, and serine 151. A CUE 1 domain is found at 156 to 198; it reads LKDAKLQTLKELFPQRSDSDLLKLIDSTSTMDGAIAAALLKFG. The segment at 201–250 is disordered; the sequence is GGGPRKRKLSSSSEAYEEDEANDDQSLKKPRGDRREESNESAEASSNWEK. Residues serine 210 and serine 213 each carry the phosphoserine modification. Position 216 is a phosphotyrosine (tyrosine 216). Phosphoserine is present on residues serine 238 and serine 241. The 44-residue stretch at 250 to 293 folds into the CUE 2 domain; sequence KQESIVLKLQKEFPNFDKQELREVLKEHEWMYTEALESLKVFAE. Serine 301 carries the post-translational modification Phosphoserine. A disordered region spans residues 331-369; sequence SMKPQNGFNKKRKKNVFNPKKAVEDSEYDSGSDAGSSLD. Residues lysine 333 and lysine 469 each participate in a glycyl lysine isopeptide (Lys-Gly) (interchain with G-Cter in SUMO2) cross-link. Residues 507-675 enclose the Helicase ATP-binding domain; the sequence is ALVHKHGLNG…MSLLNFVMPH (169 aa). 519 to 527 serves as a coordination point for ATP; that stretch reads ADEMGLGKT. A DEGH box motif is present at residues 626 to 629; sequence DEGH. The Nuclear localization signal motif lies at 719-736; that stretch reads RRVKEEVLKLLPPKKDQI. Lysine 722 is covalently cross-linked (Glycyl lysine isopeptide (Lys-Gly) (interchain with G-Cter in SUMO2)). The region spanning 856–1008 is the Helicase C-terminal domain; that stretch reads TLGCILSELK…MTTVDEADEG (153 aa). 895 to 902 provides a ligand contact to ATP; the sequence is YLRLDGKT. Lysine 994 participates in a covalent cross-link: Glycyl lysine isopeptide (Lys-Gly) (interchain with G-Cter in SUMO2). Residues 1003–1006 carry the DEAD box motif; that stretch reads DEAD.

Belongs to the SNF2/RAD54 helicase family. In terms of assembly, binds to DNA preferentially in the vicinity of transcriptional start sites. Interacts with MSH2 and TRIM28. Part of a complex composed of TRIM28, HDAC1, HDAC2 and EHMT2. Interacts with PCNA.

The protein localises to the nucleus. It is found in the chromosome. The enzyme catalyses ATP + H2O = ADP + phosphate + H(+). Functionally, DNA helicase that possesses intrinsic ATP-dependent nucleosome-remodeling activity and is both required for DNA repair and heterochromatin organization. Promotes DNA end resection of double-strand breaks (DSBs) following DNA damage: probably acts by weakening histone DNA interactions in nucleosomes flanking DSBs. Required for the restoration of heterochromatin organization after replication. Acts at replication sites to facilitate the maintenance of heterochromatin by directing H3 and H4 histones deacetylation, H3 'Lys-9' trimethylation (H3K9me3) and restoration of silencing. This chain is SWI/SNF-related matrix-associated actin-dependent regulator of chromatin subfamily A containing DEAD/H box 1 (Smarcad1), found in Rattus norvegicus (Rat).